Reading from the N-terminus, the 617-residue chain is Proline--tRNA ligase (617 aa).

This sequence belongs to the class-II aminoacyl-tRNA synthetase family. ProS type 1 subfamily. In terms of assembly, homodimer.

The protein localises to the cytoplasm. The enzyme catalyses tRNA(Pro) + L-proline + ATP = L-prolyl-tRNA(Pro) + AMP + diphosphate. Its function is as follows. Catalyzes the attachment of proline to tRNA(Pro) in a two-step reaction: proline is first activated by ATP to form Pro-AMP and then transferred to the acceptor end of tRNA(Pro). As ProRS can inadvertently accommodate and process non-cognate amino acids such as alanine and cysteine, to avoid such errors it has two additional distinct editing activities against alanine. One activity is designated as 'pretransfer' editing and involves the tRNA(Pro)-independent hydrolysis of activated Ala-AMP. The other activity is designated 'posttransfer' editing and involves deacylation of mischarged Ala-tRNA(Pro). The misacylated Cys-tRNA(Pro) is not edited by ProRS. This Streptococcus pneumoniae (strain P1031) protein is Proline--tRNA ligase.